The following is a 131-amino-acid chain: MAQSLALSLLILVLAFGIPGTQGSDGGAQDCCLKYSQRKIPAKVVRSYRKQEPSLGCSIPAILFLPRKRSQAELCADPKELWVQQLMQHLDKTPTPRKPVQGCRKDRGVPKNGKKGKGCKRTEQSQTPKGP.

Positions 1–23 (MAQSLALSLLILVLAFGIPGTQG) are cleaved as a signal peptide. Intrachain disulfides connect C31–C57, C32–C75, and C103–C119. The interval 89–131 (HLDKTPTPRKPVQGCRKDRGVPKNGKKGKGCKRTEQSQTPKGP) is disordered.

It belongs to the intercrine beta (chemokine CC) family. Monomer. Binds to CCR7. Interacts with PDPN; relocalizes PDPN to the basolateral membrane. Interacts with TNFAIP6 (via Link domain). Interacts with GPR174.

It is found in the secreted. Functionally, inhibits hemopoiesis and stimulates chemotaxis. Chemotactic in vitro for thymocytes and activated T-cells, but not for B-cells, macrophages, or neutrophils. Shows preferential activity towards naive T-cells. May play a role in mediating homing of lymphocytes to secondary lymphoid organs. Binds to atypical chemokine receptor ACKR4 and mediates the recruitment of beta-arrestin (ARRB1/2) to ACKR4. This is C-C motif chemokine 21 (CCL21) from Macaca mulatta (Rhesus macaque).